The sequence spans 279 residues: Large ribosomal subunit protein uL2 (279 aa).

Disordered stretches follow at residues 29 to 53 (PEKS…TTRH) and 224 to 279 (VAMN…KKRK). Positions 253 to 268 (KEGRTRHPNKESDKLI) are enriched in basic and acidic residues. Basic residues predominate over residues 269–279 (VRRRNAGKKRK).

It belongs to the universal ribosomal protein uL2 family. Part of the 50S ribosomal subunit. Forms a bridge to the 30S subunit in the 70S ribosome.

In terms of biological role, one of the primary rRNA binding proteins. Required for association of the 30S and 50S subunits to form the 70S ribosome, for tRNA binding and peptide bond formation. It has been suggested to have peptidyltransferase activity; this is somewhat controversial. Makes several contacts with the 16S rRNA in the 70S ribosome. This is Large ribosomal subunit protein uL2 from Leifsonia xyli subsp. xyli (strain CTCB07).